The sequence spans 381 residues: Protein-glutamate methylesterase/protein-glutamine glutaminase (381 aa).

The Response regulatory domain maps to 8–125; sequence QVLCIDDSAL…RDGMNEYADQ (118 aa). D59 carries the post-translational modification 4-aspartylphosphate. A CheB-type methylesterase domain is found at 183 to 375; sequence FSSTEKLIIV…PHVLARLSAH (193 aa). Residues S195, H221, and D317 contribute to the active site.

The protein belongs to the CheB family. In terms of processing, phosphorylated by CheA. Phosphorylation of the N-terminal regulatory domain activates the methylesterase activity.

Its subcellular location is the cytoplasm. The enzyme catalyses [protein]-L-glutamate 5-O-methyl ester + H2O = L-glutamyl-[protein] + methanol + H(+). The catalysed reaction is L-glutaminyl-[protein] + H2O = L-glutamyl-[protein] + NH4(+). Its function is as follows. Involved in chemotaxis. Part of a chemotaxis signal transduction system that modulates chemotaxis in response to various stimuli. Catalyzes the demethylation of specific methylglutamate residues introduced into the chemoreceptors (methyl-accepting chemotaxis proteins or MCP) by CheR. Also mediates the irreversible deamidation of specific glutamine residues to glutamic acid. The protein is Protein-glutamate methylesterase/protein-glutamine glutaminase of Ralstonia nicotianae (strain ATCC BAA-1114 / GMI1000) (Ralstonia solanacearum).